The sequence spans 124 residues: Small ribosomal subunit protein bS6 (124 aa).

Belongs to the bacterial ribosomal protein bS6 family.

Its function is as follows. Binds together with bS18 to 16S ribosomal RNA. The chain is Small ribosomal subunit protein bS6 from Bordetella avium (strain 197N).